The sequence spans 391 residues: Multidrug resistance protein MdtL (391 aa).

A run of 12 helical transmembrane segments spans residues 4–24 (FLIC…MYLV), 42–62 (IAFS…GKVA), 69–89 (PVAI…SLAE), 93–113 (LFLA…VVAF), 131–151 (LLNG…HLIM), 158–178 (SLFW…LFIL), 203–222 (FFLS…LTFV), 245–265 (ALTA…LGIF), 269–289 (TLMI…AVSP), 293–313 (VSLF…GVAM), 331–351 (LGIA…VVGI), and 356–376 (MLIG…MFVA).

This sequence belongs to the major facilitator superfamily. DHA1 family. MdtL (TC 2.A.1.2.22) subfamily.

The protein localises to the cell inner membrane. In terms of biological role, confers resistance to chloramphenicol. The protein is Multidrug resistance protein MdtL of Escherichia coli O9:H4 (strain HS).